The chain runs to 400 residues: Phosphoglycerate kinase (400 aa).

Substrate-binding positions include 21 to 23, R37, 60 to 63, R121, and R154; these read DFN and HLGR. ATP is bound by residues K204, E326, and 355-358; that span reads GGDS.

It belongs to the phosphoglycerate kinase family. In terms of assembly, monomer.

The protein localises to the cytoplasm. The catalysed reaction is (2R)-3-phosphoglycerate + ATP = (2R)-3-phospho-glyceroyl phosphate + ADP. It functions in the pathway carbohydrate degradation; glycolysis; pyruvate from D-glyceraldehyde 3-phosphate: step 2/5. The protein is Phosphoglycerate kinase of Chloroflexus aurantiacus (strain ATCC 29366 / DSM 635 / J-10-fl).